The chain runs to 256 residues: Small ribosomal subunit protein uS2 (256 aa).

The protein belongs to the universal ribosomal protein uS2 family.

This is Small ribosomal subunit protein uS2 from Ruegeria sp. (strain TM1040) (Silicibacter sp.).